The sequence spans 218 residues: Regulator of G-protein signaling 20 (218 aa).

The segment covering 1–10 has biased composition (basic and acidic residues); the sequence is MGSERTEMRK. Residues 1–26 form a disordered region; that stretch reads MGSERTEMRKRQMAATQETPGTAQAQ. Polar residues predominate over residues 14–26; it reads AATQETPGTAQAQ. The region spanning 92 to 208 is the RGS domain; that stretch reads SFDKLMLTPA…MNSAIYKDLL (117 aa).

Forms a complex with G(alpha)z/i2 subunits and mu-opioid receptors; the formation of this complex results in mu-opioid receptor desensitization. Interacts with OPRM1. Post-translationally, fatty acylated. Heavily palmitoylated in the cysteine string motif. N- and O-glycosylated in synapsomal membranes. In terms of processing, sumoylated by SUMO1 and SUM02 in synaptosomes. The sumoylated forms act as a scaffold for sequestering mu-opioid receptor-activated G(alpha) subunits.

The protein resides in the membrane. The protein localises to the nucleus. It localises to the cytoplasm. Its function is as follows. Inhibits signal transduction by increasing the GTPase activity of G protein alpha subunits thereby driving them into their inactive GDP-bound form. Binds selectively to G(z)-alpha and G(alpha)-i2 subunits, accelerates their GTPase activity and regulates their signaling activities. The G(z)-alpha activity is inhibited by the phosphorylation and palmitoylation of the G-protein. Negatively regulates mu-opioid receptor-mediated activation of the G-proteins. The sequence is that of Regulator of G-protein signaling 20 (RGS20) from Gallus gallus (Chicken).